Consider the following 279-residue polypeptide: Urease accessory protein UreD (279 aa).

The protein belongs to the UreD family. In terms of assembly, ureD, UreF and UreG form a complex that acts as a GTP-hydrolysis-dependent molecular chaperone, activating the urease apoprotein by helping to assemble the nickel containing metallocenter of UreC. The UreE protein probably delivers the nickel.

It localises to the cytoplasm. Its function is as follows. Required for maturation of urease via the functional incorporation of the urease nickel metallocenter. The protein is Urease accessory protein UreD of Paracoccus denitrificans (strain Pd 1222).